The following is a 234-amino-acid chain: Eosinophil granule major basic protein 2 (234 aa).

The N-terminal stretch at 1 to 15 (MKLLLLLALLVGAVS) is a signal peptide. Residues 16-115 (TRHLNVDTSS…VKFEGSPGCK (100 aa)) constitute a propeptide, acidic. A disordered region spans residues 26 to 96 (LQSLQGEESL…SSELDMGPED (71 aa)). O-linked (Xyl...) (glycosaminoglycan) serine glycosylation occurs at Ser69. Over residues 71–94 (SEDDPEEEEEEKEMESSSELDMGP) the composition is skewed to acidic residues. Residues 133–234 (SVCQRCFRGN…GVRRAFSCSY (102 aa)) form the C-type lectin domain. 2 cysteine pairs are disulfide-bonded: Cys135/Cys232 and Cys209/Cys224.

In terms of processing, nitrated.

The protein localises to the cytoplasmic granule. Functionally, MBP may play some important roles in the allergic reactions and inflammations, since MBP is capable of releasing histamine from mast cells and damaging the epithelial cells of bronchial tubes. Antiparasitic and antibiotic. The chain is Eosinophil granule major basic protein 2 (MBP2) from Cavia porcellus (Guinea pig).